The following is a 216-amino-acid chain: Thiopurine S-methyltransferase (216 aa).

Positions 10, 45, 66, and 123 each coordinate S-adenosyl-L-methionine.

Belongs to the class I-like SAM-binding methyltransferase superfamily. TPMT family.

The protein resides in the cytoplasm. The enzyme catalyses S-adenosyl-L-methionine + a thiopurine = S-adenosyl-L-homocysteine + a thiopurine S-methylether.. The polypeptide is Thiopurine S-methyltransferase (Pseudomonas putida (strain GB-1)).